Consider the following 295-residue polypeptide: Lectin 11 (295 aa).

Residues 1-22 (MHYSHFYFIINNTNMTINAIPK) lie on the Cytoplasmic side of the membrane. A helical transmembrane segment spans residues 23–45 (LFATKNSISLSIVIFMYLLILVA). Over 46-295 (NVKSDSSFNF…ILSWSFTSNM (250 aa)) the chain is Extracellular. N-linked (GlcNAc...) asparagine glycosylation occurs at Asn-152.

It belongs to the leguminous lectin family.

Its subcellular location is the membrane. In terms of biological role, may be involved in arbuscular mycorrhizal (AM) symbiosis with AM fungi. This is Lectin 11 from Medicago truncatula (Barrel medic).